Here is a 213-residue protein sequence, read N- to C-terminus: Guanylate kinase (213 aa).

A Guanylate kinase-like domain is found at 12–190 (GLCLVVAAPS…AIDQVRTILH (179 aa)). 19–26 (APSGAGKS) contributes to the ATP binding site.

Belongs to the guanylate kinase family.

The protein resides in the cytoplasm. It carries out the reaction GMP + ATP = GDP + ADP. In terms of biological role, essential for recycling GMP and indirectly, cGMP. This is Guanylate kinase from Granulibacter bethesdensis (strain ATCC BAA-1260 / CGDNIH1).